A 302-amino-acid polypeptide reads, in one-letter code: uncharacterized protein (302 aa).

7 helical membrane-spanning segments follow: residues 25–45, 58–78, 104–124, 158–178, 182–202, 215–235, and 247–267; these read SFIF…LQIF, FSYL…VIAL, IQVG…WMFL, YGLL…ATVL, FAWA…QYVP, ALSI…GYLL, and MMYI…MFYL. The 71-residue stretch at 175–245 folds into the PQ-loop domain; the sequence is ATVLSSNFAW…SRLPGTNWTT (71 aa).

It is found in the membrane. This is an uncharacterized protein from Schizosaccharomyces pombe (strain 972 / ATCC 24843) (Fission yeast).